A 347-amino-acid polypeptide reads, in one-letter code: ATPase GET3 (347 aa).

Position 26–33 (26–33) interacts with ATP; sequence KGGVGKTT. Aspartate 57 is a catalytic residue. ATP contacts are provided by glutamate 240 and asparagine 267. Zn(2+) contacts are provided by cysteine 279 and cysteine 282.

This sequence belongs to the arsA ATPase family. Homodimer. Component of the Golgi to ER traffic (GET) complex, which is composed of GET1, GET2 and GET3. Within the complex, GET1 and GET2 form a heterotetramer which is stabilized by phosphatidylinositol binding and which binds to the GET3 homodimer. Interacts with the chloride channel protein GEF1.

The protein resides in the cytoplasm. Its subcellular location is the endoplasmic reticulum. It is found in the golgi apparatus. Its function is as follows. ATPase required for the post-translational delivery of tail-anchored (TA) proteins to the endoplasmic reticulum. Recognizes and selectively binds the transmembrane domain of TA proteins in the cytosol. This complex then targets to the endoplasmic reticulum by membrane-bound receptors GET1 and GET2, where the tail-anchored protein is released for insertion. This process is regulated by ATP binding and hydrolysis. ATP binding drives the homodimer towards the closed dimer state, facilitating recognition of newly synthesized TA membrane proteins. ATP hydrolysis is required for insertion. Subsequently, the homodimer reverts towards the open dimer state, lowering its affinity for the GET1-GET2 receptor, and returning it to the cytosol to initiate a new round of targeting. Cooperates with the HDEL receptor ERD2 to mediate the ATP-dependent retrieval of resident ER proteins that contain a C-terminal H-D-E-L retention signal from the Golgi to the ER. Involved in low-level resistance to the oxyanions arsenite and arsenate, and in heat tolerance. The chain is ATPase GET3 from Scheffersomyces stipitis (strain ATCC 58785 / CBS 6054 / NBRC 10063 / NRRL Y-11545) (Yeast).